The chain runs to 456 residues: Bifunctional protein GlmU (456 aa).

Residues 1–229 are pyrophosphorylase; that stretch reads MLNSAMSVVI…ISETDGVNNR (229 aa). UDP-N-acetyl-alpha-D-glucosamine is bound by residues 11 to 14, lysine 25, glutamine 76, 81 to 82, 103 to 105, glycine 140, glutamate 154, asparagine 169, and asparagine 227; these read LAAG, GT, and YGD. Residue aspartate 105 coordinates Mg(2+). Residue asparagine 227 participates in Mg(2+) binding. Residues 230-250 form a linker region; it reads LQLSRLERIYQAEQAEKLLLS. The segment at 251–456 is N-acetyltransferase; sequence GVMLRDPARF…QGWQRPVKKK (206 aa). 2 residues coordinate UDP-N-acetyl-alpha-D-glucosamine: arginine 333 and lysine 351. The active-site Proton acceptor is the histidine 363. Positions 366 and 377 each coordinate UDP-N-acetyl-alpha-D-glucosamine. Acetyl-CoA-binding positions include alanine 380, 386 to 387, serine 405, alanine 423, and arginine 440; that span reads NY.

In the N-terminal section; belongs to the N-acetylglucosamine-1-phosphate uridyltransferase family. It in the C-terminal section; belongs to the transferase hexapeptide repeat family. As to quaternary structure, homotrimer. Mg(2+) is required as a cofactor.

The protein resides in the cytoplasm. The catalysed reaction is alpha-D-glucosamine 1-phosphate + acetyl-CoA = N-acetyl-alpha-D-glucosamine 1-phosphate + CoA + H(+). The enzyme catalyses N-acetyl-alpha-D-glucosamine 1-phosphate + UTP + H(+) = UDP-N-acetyl-alpha-D-glucosamine + diphosphate. The protein operates within nucleotide-sugar biosynthesis; UDP-N-acetyl-alpha-D-glucosamine biosynthesis; N-acetyl-alpha-D-glucosamine 1-phosphate from alpha-D-glucosamine 6-phosphate (route II): step 2/2. It participates in nucleotide-sugar biosynthesis; UDP-N-acetyl-alpha-D-glucosamine biosynthesis; UDP-N-acetyl-alpha-D-glucosamine from N-acetyl-alpha-D-glucosamine 1-phosphate: step 1/1. It functions in the pathway bacterial outer membrane biogenesis; LPS lipid A biosynthesis. Its function is as follows. Catalyzes the last two sequential reactions in the de novo biosynthetic pathway for UDP-N-acetylglucosamine (UDP-GlcNAc). The C-terminal domain catalyzes the transfer of acetyl group from acetyl coenzyme A to glucosamine-1-phosphate (GlcN-1-P) to produce N-acetylglucosamine-1-phosphate (GlcNAc-1-P), which is converted into UDP-GlcNAc by the transfer of uridine 5-monophosphate (from uridine 5-triphosphate), a reaction catalyzed by the N-terminal domain. The protein is Bifunctional protein GlmU of Salmonella choleraesuis (strain SC-B67).